We begin with the raw amino-acid sequence, 364 residues long: MSQNSLRLVEDKSVDKSKALEAALSQIERSFGKGSIMKLGSNENVVEIETISTGSLGLDIALGVGGLPRGRIIEIYGPESSGKTTLALQTIAEAQKKGGICAFVDAEHALDPVYARKLGVDLQNLLISQPDTGEQALEITDTLVRSGAVDVLVVDSVAALTPRAEIEGEMGDSLPGLQARLMSQALRKLTASISKSNTMVIFINQIRMKIGVMFGSPETTTGGNALKFYASVRLDIRRIGAVKEREEVIGNQTRVKVVKNKMAPPFKQVEFDIMYGEGVSKTGELVDLGVKAGIVEKSGAWFSYNSQRLGQGRENAKTFLRDNPDLAREIELSLRQNAGLIADRFLQNGGPDPDDGDGDATAEM.

77 to 84 (GPESSGKT) is an ATP binding site. The segment at 343-364 (DRFLQNGGPDPDDGDGDATAEM) is disordered. Positions 352–364 (DPDDGDGDATAEM) are enriched in acidic residues.

The protein belongs to the RecA family.

It localises to the cytoplasm. In terms of biological role, can catalyze the hydrolysis of ATP in the presence of single-stranded DNA, the ATP-dependent uptake of single-stranded DNA by duplex DNA, and the ATP-dependent hybridization of homologous single-stranded DNAs. It interacts with LexA causing its activation and leading to its autocatalytic cleavage. The polypeptide is Protein RecA (Rhizobium johnstonii (strain DSM 114642 / LMG 32736 / 3841) (Rhizobium leguminosarum bv. viciae)).